The sequence spans 542 residues: Chaperonin GroEL 2 (542 aa).

ATP contacts are provided by residues 30–33 (TLGP), K51, 87–91 (DGTTT), G415, and D496.

It belongs to the chaperonin (HSP60) family. Forms a cylinder of 14 subunits composed of two heptameric rings stacked back-to-back. Interacts with the co-chaperonin GroES.

The protein localises to the cytoplasm. The enzyme catalyses ATP + H2O + a folded polypeptide = ADP + phosphate + an unfolded polypeptide.. Its function is as follows. Together with its co-chaperonin GroES, plays an essential role in assisting protein folding. The GroEL-GroES system forms a nano-cage that allows encapsulation of the non-native substrate proteins and provides a physical environment optimized to promote and accelerate protein folding. This Rhizobium leguminosarum protein is Chaperonin GroEL 2.